We begin with the raw amino-acid sequence, 493 residues long: Alpha-amylase-related protein (493 aa).

The first 19 residues, 1-19, serve as a signal peptide directing secretion; that stretch reads MFKLALTLTLCLAGSLSLA. Q20 carries the post-translational modification Pyrrolidone carboxylic acid. Cysteines 47 and 103 form a disulfide. 3 residues coordinate Ca(2+): N117, Q168, and D177. A disulfide bridge connects residues C156 and C170. Residue R205 coordinates chloride. Catalysis depends on D207, which acts as the Nucleophile. H211 is a binding site for Ca(2+). E244 acts as the Proton donor in catalysis. Chloride contacts are provided by N307 and R342. 3 disulfides stabilise this stretch: C375/C381, C417/C440, and C447/C459.

This sequence belongs to the glycosyl hydrolase 13 family. In terms of assembly, monomer. It depends on Ca(2+) as a cofactor. Chloride is required as a cofactor.

The protein localises to the secreted. The catalysed reaction is Endohydrolysis of (1-&gt;4)-alpha-D-glucosidic linkages in polysaccharides containing three or more (1-&gt;4)-alpha-linked D-glucose units.. This Drosophila yakuba (Fruit fly) protein is Alpha-amylase-related protein (Amyrel).